The primary structure comprises 408 residues: Neutral cholesterol ester hydrolase 1 (408 aa).

Over 1–4 the chain is Cytoplasmic; the sequence is MRSS. Residues 5-25 form a helical; Signal-anchor for type II membrane protein membrane-spanning segment; that stretch reads CVLLTALVALAAYYVYIPLPG. Topologically, residues 26-408 are lumenal; that stretch reads SVSDPWKLML…SYIKWLDQNL (383 aa). An Involved in the stabilization of the negatively charged intermediate by the formation of the oxyanion hole motif is present at residues 113 to 115; that stretch reads HGG. Serine 191 is a catalytic residue. N-linked (GlcNAc...) asparagine glycans are attached at residues asparagine 270 and asparagine 287. Residues aspartate 348 and histidine 378 contribute to the active site. Asparagine 389 is a glycosylation site (N-linked (GlcNAc...) asparagine).

This sequence belongs to the 'GDXG' lipolytic enzyme family. In terms of processing, N-glycosylated.

It is found in the cell membrane. The protein localises to the microsome. It carries out the reaction a 1-O-alkyl-2-acetyl-sn-glycerol + H2O = a 1-O-alkyl-sn-glycerol + acetate + H(+). It catalyses the reaction 1-O-hexadecyl-2-acetyl-sn-glycerol + H2O = 1-O-hexadecyl-sn-glycerol + acetate + H(+). The catalysed reaction is a cholesterol ester + H2O = cholesterol + a fatty acid + H(+). The enzyme catalyses cholesteryl (9Z-octadecenoate) + H2O = cholesterol + (9Z)-octadecenoate + H(+). Functionally, hydrolyzes 2-acetyl monoalkylglycerol ether (1-O-alkyl-2-acetyl-sn-glycerol), the penultimate precursor of the pathway for de novo synthesis of platelet-activating factor. May be responsible for the hydrolysis of cholesterol esters (such as cholesteryl (9Z-octadecenoate)) in macrophages. Also involved in organ detoxification by hydrolyzing exogenous organophosphorus compounds. The protein is Neutral cholesterol ester hydrolase 1 (NCEH1) of Pongo abelii (Sumatran orangutan).